The following is a 334-amino-acid chain: Formamidase (334 aa).

Positions 14-260 (FLVAAIQFPV…WEIVTGEIYP (247 aa)) constitute a CN hydrolase domain. The active-site Proton acceptor is E60. K133 serves as the catalytic Proton donor. Residue C166 is the Nucleophile of the active site.

This sequence belongs to the carbon-nitrogen hydrolase superfamily. Aliphatic amidase family.

It carries out the reaction formamide + H2O = formate + NH4(+). Its function is as follows. Is an aliphatic amidase with a restricted substrate specificity, as it only hydrolyzes formamide. The polypeptide is Formamidase (Helicobacter pylori (strain HPAG1)).